Here is a 423-residue protein sequence, read N- to C-terminus: Adenylosuccinate synthetase (423 aa).

GTP contacts are provided by residues 11 to 17 (GDEGKGK) and 39 to 41 (GHT). D12 acts as the Proton acceptor in catalysis. Mg(2+) is bound by residues D12 and G39. Residues 12–15 (DEGK), 37–40 (NAGH), T127, R141, Q223, T238, and R302 each bind IMP. H40 serves as the catalytic Proton donor. Substrate is bound at residue 298-304 (TTTGRSR). Residues R304, 330 to 332 (KLD), and 412 to 414 (SVG) each bind GTP.

This sequence belongs to the adenylosuccinate synthetase family. In terms of assembly, homodimer. It depends on Mg(2+) as a cofactor.

The protein resides in the cytoplasm. The enzyme catalyses IMP + L-aspartate + GTP = N(6)-(1,2-dicarboxyethyl)-AMP + GDP + phosphate + 2 H(+). The protein operates within purine metabolism; AMP biosynthesis via de novo pathway; AMP from IMP: step 1/2. Plays an important role in the de novo pathway of purine nucleotide biosynthesis. Catalyzes the first committed step in the biosynthesis of AMP from IMP. The chain is Adenylosuccinate synthetase from Methanococcoides burtonii (strain DSM 6242 / NBRC 107633 / OCM 468 / ACE-M).